We begin with the raw amino-acid sequence, 396 residues long: S-adenosylmethionine synthase (396 aa).

Residue Glu11 participates in Mg(2+) binding. His17 is an ATP binding site. Position 45 (Glu45) interacts with K(+). L-methionine is bound by residues Glu58 and Gln101. Residues 169 to 171 (DGK), 237 to 240 (SGRF), Asp248, 254 to 255 (RK), Ala271, Lys275, and Lys279 contribute to the ATP site. Asp248 provides a ligand contact to L-methionine. Residue Lys279 participates in L-methionine binding.

It belongs to the AdoMet synthase family. As to quaternary structure, homotetramer. It depends on Mn(2+) as a cofactor. Requires Mg(2+) as cofactor. Co(2+) serves as cofactor. The cofactor is K(+).

The protein resides in the cytoplasm. The enzyme catalyses L-methionine + ATP + H2O = S-adenosyl-L-methionine + phosphate + diphosphate. It participates in amino-acid biosynthesis; S-adenosyl-L-methionine biosynthesis; S-adenosyl-L-methionine from L-methionine: step 1/1. Its function is as follows. Catalyzes the formation of S-adenosylmethionine from methionine and ATP. The reaction comprises two steps that are both catalyzed by the same enzyme: formation of S-adenosylmethionine (AdoMet) and triphosphate, and subsequent hydrolysis of the triphosphate. The polypeptide is S-adenosylmethionine synthase (SAMS) (Medicago sativa subsp. falcata (Sickle medic)).